Reading from the N-terminus, the 616-residue chain is GPI mannosyltransferase 3 (616 aa).

At 1-16 the chain is on the cytoplasmic side; the sequence is MAHEVHRIKPKLGRTQ. A helical membrane pass occupies residues 17–37; it reads IFWVFLAFRVLNAVLTRTFFQ. Residues 38–86 are Lumenal-facing; that stretch reads ADEFWQALEPAHWKAFKYGELTWEWKFGVRSYLFPMIFELTYRLVSLSS. The chain crosses the membrane as a helical span at residues 87–107; it reads ILLHYALLLLSTIGSDLLILL. Residues 108–136 lie on the Cytoplasmic side of the membrane; sequence LPKYELSWQVAEDLKRLPFDVTRSFEYYG. The helical transmembrane segment at 137–157 threads the bilayer; the sequence is VIYAPKIVMAVLASIGEYYIV. Over 158–188 the chain is Lumenal; sequence RFVQKLYLLTLDKRNEKEEEERRSGLSEITK. A helical membrane pass occupies residues 189–209; the sequence is FALLLSLTNFFNCFFITRTFI. Over 210–240 the chain is Cytoplasmic; that stretch reads NSFEMILTSIALYYWDWTGGQMIKESSFTKS. The helical transmembrane segment at 241 to 261 threads the bilayer; that stretch reads LIFAFLACLQRPSSGLIWVIP. Over 262–278 the chain is Lumenal; that stretch reads SISLILNLVGKKQYHLL. A helical membrane pass occupies residues 279–299; that stretch reads FITFSKVLRSFFLVFTANAII. Residues 300–338 are Cytoplasmic-facing; the sequence is DMYFYEKVTFPFFRFLKFNFTTPLSKFYGVAPWHFHFFQ. A helical transmembrane segment spans residues 339–359; that stretch reads SLPIVLGASIPAFAFGLFFPL. Residues 360 to 392 are Lumenal-facing; it reads SKRSFPKKYLNPFFQVKLTILLNLLVYSTLPHK. A helical membrane pass occupies residues 393 to 413; the sequence is EFRFIFPLQPLFILISSFGLL. The Cytoplasmic portion of the chain corresponds to 414 to 423; sequence RLDRDYWKRL. A helical membrane pass occupies residues 424–444; that stretch reads SGLKSLLWLVPFVSVFIALLL. At 445–616 the chain is on the lumenal side; the sequence is DTFHESGSIE…DYSDIPAADI (172 aa).

It belongs to the glycosyltransferase 22 family. PIGB subfamily.

It localises to the endoplasmic reticulum membrane. It functions in the pathway glycolipid biosynthesis; glycosylphosphatidylinositol-anchor biosynthesis. Mannosyltransferase involved in glycosylphosphatidylinositol-anchor biosynthesis. Transfers the third mannose to Man2-GlcN-acyl-PI during GPI precursor assembly. The sequence is that of GPI mannosyltransferase 3 (GPI10) from Saccharomyces cerevisiae (strain ATCC 204508 / S288c) (Baker's yeast).